The sequence spans 181 residues: Large ribosomal subunit protein uL16 (181 aa).

The protein belongs to the universal ribosomal protein uL16 family.

The polypeptide is Large ribosomal subunit protein uL16 (Pyrococcus horikoshii (strain ATCC 700860 / DSM 12428 / JCM 9974 / NBRC 100139 / OT-3)).